The sequence spans 430 residues: MDLLSDIEKQLQKATAQGFLIALSGGLDSTVLLSLFAKLCQKQPHLPPLSVRAIHIHHGLSPNADSWAKHCQNLCDQFQIPLIIERVQVDKTNGIEAGAREARYQAIKKHLQIQEMLVTAHHLNDQTETFFLALKRGSGLQGLSAMQQQSVLFGMPIFRPLLGFTRPQLEDYAQQEKLNWVTDESNEDNRYDRNFLRNEILPKLRERWAHFDLAVQRSAQHCFEQQQLINDLLSEIFTEHCQIKNQFKLLQFRQYSLAKQTALLRMWLAKNQLEMPSKRQLTQLINDVIFAKEEANPQFQLVNKVIRRYQDSLYLTKPFSDLTKCTLKLEQNMLNLPDDLGNLTVHENEHNLIFYWQDYSVTLEKTNLPISIRFGYSGKVKHHPKRPREDIKKIWQELSVPPWERNRIPLIFYGNELKSAVGFFRVFDEY.

24–29 (SGGLDS) lines the ATP pocket.

It belongs to the tRNA(Ile)-lysidine synthase family.

It localises to the cytoplasm. It carries out the reaction cytidine(34) in tRNA(Ile2) + L-lysine + ATP = lysidine(34) in tRNA(Ile2) + AMP + diphosphate + H(+). In terms of biological role, ligates lysine onto the cytidine present at position 34 of the AUA codon-specific tRNA(Ile) that contains the anticodon CAU, in an ATP-dependent manner. Cytidine is converted to lysidine, thus changing the amino acid specificity of the tRNA from methionine to isoleucine. The protein is tRNA(Ile)-lysidine synthase of Haemophilus influenzae (strain 86-028NP).